A 362-amino-acid polypeptide reads, in one-letter code: UDP-N-acetylglucosamine--N-acetylmuramyl-(pentapeptide) pyrophosphoryl-undecaprenol N-acetylglucosamine transferase (362 aa).

UDP-N-acetyl-alpha-D-glucosamine is bound by residues 14-16 (TGG), N126, R166, S193, and Q294.

The protein belongs to the glycosyltransferase 28 family. MurG subfamily.

It is found in the cell inner membrane. The catalysed reaction is di-trans,octa-cis-undecaprenyl diphospho-N-acetyl-alpha-D-muramoyl-L-alanyl-D-glutamyl-meso-2,6-diaminopimeloyl-D-alanyl-D-alanine + UDP-N-acetyl-alpha-D-glucosamine = di-trans,octa-cis-undecaprenyl diphospho-[N-acetyl-alpha-D-glucosaminyl-(1-&gt;4)]-N-acetyl-alpha-D-muramoyl-L-alanyl-D-glutamyl-meso-2,6-diaminopimeloyl-D-alanyl-D-alanine + UDP + H(+). It participates in cell wall biogenesis; peptidoglycan biosynthesis. Its function is as follows. Cell wall formation. Catalyzes the transfer of a GlcNAc subunit on undecaprenyl-pyrophosphoryl-MurNAc-pentapeptide (lipid intermediate I) to form undecaprenyl-pyrophosphoryl-MurNAc-(pentapeptide)GlcNAc (lipid intermediate II). The chain is UDP-N-acetylglucosamine--N-acetylmuramyl-(pentapeptide) pyrophosphoryl-undecaprenol N-acetylglucosamine transferase from Paracoccus denitrificans (strain Pd 1222).